The sequence spans 405 residues: Argininosuccinate synthase (405 aa).

11-19 (AYSGGLDTS) provides a ligand contact to ATP. Tyr90 provides a ligand contact to L-citrulline. Residue Gly119 participates in ATP binding. L-aspartate contacts are provided by Thr121, Asn125, and Asp126. Asn125 provides a ligand contact to L-citrulline. 5 residues coordinate L-citrulline: Arg129, Ser178, Ser187, Glu263, and Tyr275.

The protein belongs to the argininosuccinate synthase family. Type 1 subfamily. Homotetramer.

The protein resides in the cytoplasm. It carries out the reaction L-citrulline + L-aspartate + ATP = 2-(N(omega)-L-arginino)succinate + AMP + diphosphate + H(+). Its pathway is amino-acid biosynthesis; L-arginine biosynthesis; L-arginine from L-ornithine and carbamoyl phosphate: step 2/3. The polypeptide is Argininosuccinate synthase (Legionella pneumophila subsp. pneumophila (strain Philadelphia 1 / ATCC 33152 / DSM 7513)).